The chain runs to 547 residues: Putative cysteine ligase BshC (547 aa).

Residues 462–484 are a coiled coil; the sequence is NLAEENLDRVIAQARFLRQKVEH.

The protein belongs to the BshC family.

Functionally, involved in bacillithiol (BSH) biosynthesis. May catalyze the last step of the pathway, the addition of cysteine to glucosamine malate (GlcN-Mal) to generate BSH. This chain is Putative cysteine ligase BshC, found in Heliobacterium modesticaldum (strain ATCC 51547 / Ice1).